The primary structure comprises 214 residues: Nascent polypeptide-associated complex subunit alpha (214 aa).

The tract at residues 1–80 is disordered; it reads MPGEATETVP…SEKKARKAMS (80 aa). A compositionally biased stretch (acidic residues) spans 29 to 40; the sequence is SDSDDSPPELEQ. The span at 41–56 shows a compositional bias: low complexity; it reads DSTQTTTQQAQLAAAA. The 66-residue stretch at 69–134 folds into the NAC-A/B domain; that stretch reads SRSEKKARKA…AKIEDLSQQA (66 aa). The UBA domain maps to 175-212; the sequence is VEVKDIELVMSQANVSRAKAVRALKNNSNDIVNAIMEL.

It belongs to the NAC-alpha family.

Functionally, may promote appropriate targeting of ribosome-nascent polypeptide complexes. The protein is Nascent polypeptide-associated complex subunit alpha (naca) of Xenopus tropicalis (Western clawed frog).